The primary structure comprises 618 residues: MRCLAARVNYKTLIIICALFTLVTVLLWNKCSSDKAIQFPRHLSSGFRVDGLEKRSAASESNHYANHIAKQQSEEAFPQEQQKAPPVVGGFNSNGGSKVLGLKYEEIDCLINDEHTIKGRREGNEVFLPFTWVEKYFDVYGKVVQYDGYDRFEFSHSYSKVYAQRSPYHPDGVFMSFEGYNVEVRDRVKCISGVEGVPLSTQWGPQGYFYPIQIAQYGLSHYSKNLTEKPPHIEVYETAEDRDRNIRPNEWTVPKGCFMASVADKSRSTNVKQFIAPETSEGVSLQLGNTKDFIISFDLKLLTNGSVSVVLETTEKNQLFTVHYVSNTQLIAFRDRDIYYGIGPRTSWSTVTRDLVTDLRKGVGLSNTKAVKPTKIMPKKVVRLIAKGKGFLDNITISTTAHMAAFFAASDWLVRNQDEKGGWPIMVTRKLGEGFKSLEPGWYSAMAQGQAISTLVRAYLLTKDYVFLSSALRATAPYKFPSEQHGVKAVFMNKHDWYEEYPTTPSSFVLNGFMYSLIGLYDLKETAGETLGKEARSLYERGMESLKAMLPLYDTGSGTIYDLRHFMLGIAPNLARWDYHTTHINQLQLLSTIDESPIFKEFVKRWKSYLKGSRAKHN.

Residues 1-11 (MRCLAARVNYK) are Cytoplasmic-facing. Residues 12–29 (TLIIICALFTLVTVLLWN) traverse the membrane as a helical; Signal-anchor for type II membrane protein segment. Over 30–618 (KCSSDKAIQF…YLKGSRAKHN (589 aa)) the chain is Lumenal. Substrate contacts are provided by residues Tyr-180, 185–187 (RDR), Gln-202, Tyr-210, Gln-213, and Gln-216. Residues Thr-238, Glu-240, Thr-269, Asn-270, and Asp-393 each coordinate Ca(2+). Substrate contacts are provided by residues 430–433 (KLGE), 500–501 (EY), Asn-511, Tyr-515, Tyr-561, Arg-564, and 573–582 (NLARWDYHTT).

It belongs to the D-glucuronyl C5-epimerase family. As to quaternary structure, homodimer. Interacts with HS2ST1. In terms of tissue distribution, widely expressed with highest levels in lung and lowest levels in spleen.

It localises to the golgi apparatus membrane. The enzyme catalyses [heparosan-N-sulfate](n) = [heparan-N-sulfate](n). It participates in glycan metabolism; heparan sulfate biosynthesis. It functions in the pathway glycan metabolism; heparin biosynthesis. Its function is as follows. Converts D-glucuronic acid residues adjacent to N-sulfate sugar residues to L-iduronic acid residues, both in maturing heparan sulfate (HS) and heparin chains. This is important for further modifications that determine the specificity of interactions between these glycosaminoglycans and proteins. In Mus musculus (Mouse), this protein is D-glucuronyl C5-epimerase (Glce).